We begin with the raw amino-acid sequence, 1123 residues long: Translation initiation factor IF-2 (1123 aa).

2 disordered regions span residues 52–452 and 480–512; these read LLKA…KVHI and LARP…RQRQ. 3 stretches are compositionally biased toward low complexity: residues 54-73, 94-113, and 121-133; these read KAGS…PGKA, KPAA…AKSP, and AAPS…KASA. The span at 170–187 shows a compositional bias: pro residues; that stretch reads PPSPPARPVPQQPSPPSA. Residues 193–206 are compositionally biased toward low complexity; it reads APIRRAAPNDAPRP. Pro residues-rich tracts occupy residues 207–217 and 258–268; these read ANAPPSRPQPK and SPRPAVSPRPS. A compositionally biased stretch (low complexity) spans 285–304; sequence RPGAPTRPGTGAGRPSRPGG. Gly residues predominate over residues 320–339; it reads GNRGEGGRPPGGARPAGGGN. Residues 388 to 403 show a composition bias toward pro residues; the sequence is ATPPVSRPTATPPSPA. Residues 412-422 are compositionally biased toward gly residues; it reads FRPGAGPGGQR. Residues 425 to 439 are compositionally biased toward basic and acidic residues; it reads GRPDWDDSAKLDALR. Residues 486–499 show a composition bias toward low complexity; the sequence is PKSQQKAAPKPVAA. Residues 500-512 are compositionally biased toward basic residues; the sequence is MRKRRKETTRQRQ. Positions 615–787 constitute a tr-type G domain; sequence RRPPVVTVMG…LLLVTEVEDL (173 aa). Positions 624 to 631 are G1; the sequence is GHVDHGKT. 624–631 provides a ligand contact to GTP; the sequence is GHVDHGKT. Residues 649–653 are G2; it reads GITQH. A G3 region spans residues 674 to 677; it reads DTPG. Residues 674–678 and 728–731 each bind GTP; these read DTPGH and NKID. A G4 region spans residues 728–731; the sequence is NKID. A G5 region spans residues 764 to 766; it reads SAI.

This sequence belongs to the TRAFAC class translation factor GTPase superfamily. Classic translation factor GTPase family. IF-2 subfamily.

The protein localises to the cytoplasm. Functionally, one of the essential components for the initiation of protein synthesis. Protects formylmethionyl-tRNA from spontaneous hydrolysis and promotes its binding to the 30S ribosomal subunits. Also involved in the hydrolysis of GTP during the formation of the 70S ribosomal complex. This chain is Translation initiation factor IF-2, found in Synechococcus sp. (strain WH7803).